Consider the following 238-residue polypeptide: tRNA1(Val) (adenine(37)-N6)-methyltransferase (238 aa).

Belongs to the methyltransferase superfamily. tRNA (adenine-N(6)-)-methyltransferase family.

It is found in the cytoplasm. It carries out the reaction adenosine(37) in tRNA1(Val) + S-adenosyl-L-methionine = N(6)-methyladenosine(37) in tRNA1(Val) + S-adenosyl-L-homocysteine + H(+). Specifically methylates the adenine in position 37 of tRNA(1)(Val) (anticodon cmo5UAC). In Shewanella baltica (strain OS195), this protein is tRNA1(Val) (adenine(37)-N6)-methyltransferase.